The primary structure comprises 409 residues: Serine/threonine transporter SstT (409 aa).

The next 9 helical transmembrane spans lie at 17-37, 49-69, 83-103, 142-162, 180-200, 218-238, 299-319, 331-351, and 357-377; these read LVVQ…FFPA, FVSA…MASI, ILLL…IASF, ALIS…GIAF, VSLI…GLVA, LVVL…LIVF, MAGA…TLGI, VVAS…LLLI, and LFGI…IIAI.

The protein belongs to the dicarboxylate/amino acid:cation symporter (DAACS) (TC 2.A.23) family.

The protein resides in the cell inner membrane. It carries out the reaction L-serine(in) + Na(+)(in) = L-serine(out) + Na(+)(out). The catalysed reaction is L-threonine(in) + Na(+)(in) = L-threonine(out) + Na(+)(out). Functionally, involved in the import of serine and threonine into the cell, with the concomitant import of sodium (symport system). This chain is Serine/threonine transporter SstT, found in Pseudomonas paraeruginosa (strain DSM 24068 / PA7) (Pseudomonas aeruginosa (strain PA7)).